A 469-amino-acid chain; its full sequence is Autophagy-related protein 18 (469 aa).

2 WD repeats span residues 188 to 228 (AHRS…KLYQ) and 233 to 272 (TYPS…NGAS). The short motif at 229–233 (FRRGT) is the L/FRRG motif element. Residues 285 to 348 (AASPGQDITG…RQSGSFSNIL (64 aa)) are disordered. The segment covering 297-306 (RADRWSRSRS) has biased composition (basic and acidic residues). 2 stretches are compositionally biased toward polar residues: residues 307–319 (YDSG…SGSE) and 337–348 (NRRQSGSFSNIL).

This sequence belongs to the WD repeat PROPPIN family. In terms of assembly, component of the PI(3,5)P2 regulatory complex.

It is found in the preautophagosomal structure membrane. Its subcellular location is the vacuole membrane. It localises to the endosome membrane. Functionally, the PI(3,5)P2 regulatory complex regulates both the synthesis and turnover of phosphatidylinositol 3,5-bisphosphate (PtdIns(3,5)P2). Necessary for proper vacuole morphology. Plays an important role in osmotically-induced vacuole fragmentation. Required for cytoplasm to vacuole transport (Cvt) vesicle formation, pexophagy and starvation-induced autophagy. Involved in correct ATG9 trafficking to the pre-autophagosomal structure. Might also be involved in premeiotic DNA replication. The sequence is that of Autophagy-related protein 18 (ATG18) from Pyricularia oryzae (strain 70-15 / ATCC MYA-4617 / FGSC 8958) (Rice blast fungus).